The primary structure comprises 489 residues: Membrane-bound lytic murein transglycosylase F (489 aa).

An N-terminal signal peptide occupies residues 1 to 32 (MFALTAYRLRCAAWLLATGIFLLLAGCSEAKA). A non-LT domain region spans residues 33–268 (PTALERVQKE…RLKDRYYGHV (236 aa)). The segment at 269 to 489 (DVLGYVGAYT…PEEDSGDEKL (221 aa)) is LT domain. Glu-315 is an active-site residue. The interval 466-489 (AESGLHLPGVNKTRPEEDSGDEKL) is disordered. The segment covering 478-489 (TRPEEDSGDEKL) has biased composition (basic and acidic residues).

In the N-terminal section; belongs to the bacterial solute-binding protein 3 family. The protein in the C-terminal section; belongs to the transglycosylase Slt family.

It localises to the cell outer membrane. The enzyme catalyses Exolytic cleavage of the (1-&gt;4)-beta-glycosidic linkage between N-acetylmuramic acid (MurNAc) and N-acetylglucosamine (GlcNAc) residues in peptidoglycan, from either the reducing or the non-reducing ends of the peptidoglycan chains, with concomitant formation of a 1,6-anhydrobond in the MurNAc residue.. Its function is as follows. Murein-degrading enzyme that degrades murein glycan strands and insoluble, high-molecular weight murein sacculi, with the concomitant formation of a 1,6-anhydromuramoyl product. Lytic transglycosylases (LTs) play an integral role in the metabolism of the peptidoglycan (PG) sacculus. Their lytic action creates space within the PG sacculus to allow for its expansion as well as for the insertion of various structures such as secretion systems and flagella. This is Membrane-bound lytic murein transglycosylase F from Pseudomonas aeruginosa (strain UCBPP-PA14).